Here is a 218-residue protein sequence, read N- to C-terminus: Large ribosomal subunit protein uL3 (218 aa).

The tract at residues 132 to 152 (FKGQGASHGTQAVHRRPGSIG) is disordered.

The protein belongs to the universal ribosomal protein uL3 family. As to quaternary structure, part of the 50S ribosomal subunit. Forms a cluster with proteins L14 and L19.

In terms of biological role, one of the primary rRNA binding proteins, it binds directly near the 3'-end of the 23S rRNA, where it nucleates assembly of the 50S subunit. The chain is Large ribosomal subunit protein uL3 from Rhodococcus erythropolis (strain PR4 / NBRC 100887).